Reading from the N-terminus, the 84-residue chain is Exodeoxyribonuclease 7 small subunit (84 aa).

Belongs to the XseB family. Heterooligomer composed of large and small subunits.

The protein localises to the cytoplasm. The enzyme catalyses Exonucleolytic cleavage in either 5'- to 3'- or 3'- to 5'-direction to yield nucleoside 5'-phosphates.. In terms of biological role, bidirectionally degrades single-stranded DNA into large acid-insoluble oligonucleotides, which are then degraded further into small acid-soluble oligonucleotides. The polypeptide is Exodeoxyribonuclease 7 small subunit (Haemophilus influenzae (strain 86-028NP)).